A 336-amino-acid polypeptide reads, in one-letter code: DNA-directed RNA polymerase subunit alpha (336 aa).

Positions 1-232 are alpha N-terminal domain (alpha-NTD); the sequence is MIQKNWQELI…DQLGVFVNFD (232 aa). The alpha C-terminal domain (alpha-CTD) stretch occupies residues 248–336; sequence FNPALLKKVD…DLAKRYEDQY (89 aa).

This sequence belongs to the RNA polymerase alpha chain family. As to quaternary structure, homodimer. The RNAP catalytic core consists of 2 alpha, 1 beta, 1 beta' and 1 omega subunit. When a sigma factor is associated with the core the holoenzyme is formed, which can initiate transcription.

It catalyses the reaction RNA(n) + a ribonucleoside 5'-triphosphate = RNA(n+1) + diphosphate. In terms of biological role, DNA-dependent RNA polymerase catalyzes the transcription of DNA into RNA using the four ribonucleoside triphosphates as substrates. This Rhizobium rhizogenes (strain K84 / ATCC BAA-868) (Agrobacterium radiobacter) protein is DNA-directed RNA polymerase subunit alpha.